We begin with the raw amino-acid sequence, 579 residues long: 6-deoxy-6-sulfo-D-gluconate dehydratase (579 aa).

Residues Cys-59, Cys-127, and Cys-200 each contribute to the [4Fe-4S] cluster site.

Belongs to the IlvD/Edd family. In terms of assembly, homodimer. Requires [4Fe-4S] cluster as cofactor.

The catalysed reaction is 6-deoxy-6-sulfo-D-gluconate = 2-dehydro-3,6-dideoxy-6-sulfo-D-gluconate + H2O. Catalyzes the dehydration of 6-deoxy-6-sulfo-D-gluconate to 2-dehydro-3,6-dideoxy-6-sulfo-D-gluconate. Is involved in a degradation pathway of sulfoquinovose (SQ) that allows P.putida SQ1 to use SQ as the sole carbon and energy source for growth. The sequence is that of 6-deoxy-6-sulfo-D-gluconate dehydratase from Pseudomonas putida (Arthrobacter siderocapsulatus).